We begin with the raw amino-acid sequence, 91 residues long: Small ribosomal subunit protein uS19 (91 aa).

The protein belongs to the universal ribosomal protein uS19 family.

Protein S19 forms a complex with S13 that binds strongly to the 16S ribosomal RNA. This Prochlorococcus marinus (strain MIT 9303) protein is Small ribosomal subunit protein uS19.